A 430-amino-acid chain; its full sequence is Tol-Pal system protein TolB (430 aa).

Positions 1-21 (MKQALRVAVSFFMLWAAVLHA) are cleaved as a signal peptide.

The protein belongs to the TolB family. In terms of assembly, the Tol-Pal system is composed of five core proteins: the inner membrane proteins TolA, TolQ and TolR, the periplasmic protein TolB and the outer membrane protein Pal. They form a network linking the inner and outer membranes and the peptidoglycan layer.

The protein localises to the periplasm. In terms of biological role, part of the Tol-Pal system, which plays a role in outer membrane invagination during cell division and is important for maintaining outer membrane integrity. TolB occupies a key intermediary position in the Tol-Pal system because it communicates directly with both membrane-embedded components, Pal in the outer membrane and TolA in the inner membrane. The chain is Tol-Pal system protein TolB from Enterobacter sp. (strain 638).